Here is a 25-residue protein sequence, read N- to C-terminus: Caerin-1.19 (25 aa).

L25 is modified (leucine amide).

This sequence belongs to the frog skin active peptide (FSAP) family. Caerin subfamily. As to expression, expressed by the skin dorsal glands.

It localises to the secreted. In terms of biological role, caerin-1.19 shows significant activity against Gram-positive organisms, but is less effective against Gram-negative organisms. This chain is Caerin-1.19, found in Ranoidea gracilenta (Dainty green tree frog).